The following is a 354-amino-acid chain: Putative succinyl-diaminopimelate desuccinylase DapE (354 aa).

Zn(2+) is bound at residue H69. D71 is an active-site residue. D95 contributes to the Zn(2+) binding site. E125 acts as the Proton acceptor in catalysis. Zn(2+) contacts are provided by E126, E154, and H330.

Belongs to the peptidase M20A family. Homodimer. Requires Zn(2+) as cofactor. The cofactor is Co(2+).

The enzyme catalyses N-succinyl-(2S,6S)-2,6-diaminopimelate + H2O = (2S,6S)-2,6-diaminopimelate + succinate. It participates in amino-acid biosynthesis; L-lysine biosynthesis via DAP pathway; LL-2,6-diaminopimelate from (S)-tetrahydrodipicolinate (succinylase route): step 3/3. Its function is as follows. Catalyzes the hydrolysis of N-succinyl-L,L-diaminopimelic acid (SDAP), forming succinate and LL-2,6-diaminoheptanedioate (DAP), an intermediate involved in the bacterial biosynthesis of lysine and meso-diaminopimelic acid. This Mycobacterium tuberculosis (strain CDC 1551 / Oshkosh) protein is Putative succinyl-diaminopimelate desuccinylase DapE (dapE).